The chain runs to 475 residues: Flotillin-like protein 4 (475 aa).

Coiled-coil stretches lie at residues 235–255 (ENQR…KKAA) and 305–325 (QYET…KEAE).

This sequence belongs to the band 7/mec-2 family. Flotillin subfamily. As to expression, expressed in roots and nodules. Primarily expressed in vascular tissues. Upon induction of nodulation, expansion of expression in the root cortex in the region of elongating root hairs, which will eventually become colonized by bacteria. Expressed in the infection zone in nodules.

It localises to the membrane. Its subcellular location is the caveola. The protein resides in the cell membrane. Its function is as follows. May act as a scaffolding protein within caveolar membranes, functionally participating in formation of caveolae or caveolae-like vesicles. Required for normal infection threads initiation and elongation and nodulation. Probably involved in polar growth of the infection thread. The chain is Flotillin-like protein 4 (FLOT4) from Medicago truncatula (Barrel medic).